The sequence spans 349 residues: Ion-translocating oxidoreductase complex subunit D (349 aa).

The next 3 helical transmembrane spans lie at 20 to 42, 77 to 99, and 124 to 144; these read VMQR…FGWG, SAML…WMIV, and AMAA…TWIA. Thr-185 is subject to FMN phosphoryl threonine. The next 5 helical transmembrane spans lie at 212 to 232, 239 to 259, 265 to 285, 291 to 311, and 315 to 335; these read STGV…LVLL, WHIS…GFLL, ASPL…FIAT, ATSS…VYII, and GGYP…APFI.

It belongs to the NqrB/RnfD family. The complex is composed of six subunits: RnfA, RnfB, RnfC, RnfD, RnfE and RnfG. It depends on FMN as a cofactor.

The protein localises to the cell inner membrane. Functionally, part of a membrane-bound complex that couples electron transfer with translocation of ions across the membrane. The sequence is that of Ion-translocating oxidoreductase complex subunit D from Shewanella baltica (strain OS223).